We begin with the raw amino-acid sequence, 1108 residues long: Alpha-mannosidase 2 (1108 aa).

Topologically, residues 1 to 9 (MLRIRRRFA) are cytoplasmic. Residues 10 to 30 (LVICSGCLLVFLSLYIILNFA) traverse the membrane as a helical; Signal-anchor for type II membrane protein segment. Topologically, residues 31-1108 (APAATQIKPN…TAAYVSSHSS (1078 aa)) are lumenal. A disordered region spans residues 70 to 92 (AETSNRDDPIRPPLKVARSPRPG). Zn(2+)-binding residues include His-153, Asp-155, Asp-267, and His-534. The Nucleophile role is filled by Asp-267.

It belongs to the glycosyl hydrolase 38 family. As to quaternary structure, homodimer; disulfide-linked. It depends on Zn(2+) as a cofactor.

It localises to the golgi apparatus membrane. The catalysed reaction is N(4)-{beta-D-GlcNAc-(1-&gt;2)-alpha-D-Man-(1-&gt;3)-[alpha-D-Man-(1-&gt;3)-[alpha-D-Man-(1-&gt;6)]-alpha-D-Man-(1-&gt;6)]-beta-D-Man-(1-&gt;4)-beta-D-GlcNAc-(1-&gt;4)-beta-D-GlcNAc}-L-asparaginyl-[protein] + 2 H2O = 2 alpha-D-mannopyranose + an N(4)-{beta-D-GlcNAc-(1-&gt;2)-alpha-D-Man-(1-&gt;3)-[alpha-D-Man-(1-&gt;6)]-beta-D-Man-(1-&gt;4)-beta-D-GlcNAc-(1-&gt;4)-beta-D-GlcNAc}-L-asparaginyl-[protein]. Its pathway is protein modification; protein glycosylation. In terms of biological role, catalyzes the first committed step in the biosynthesis of complex N-glycans. It controls conversion of high mannose to complex N-glycans; the final hydrolytic step in the N-glycan maturation pathway. This Drosophila melanogaster (Fruit fly) protein is Alpha-mannosidase 2.